The sequence spans 573 residues: CTP synthase (573 aa).

The amidoligase domain stretch occupies residues 1–281 (MGQTRIQART…DAYVVRRLGL (281 aa)). Position 23 (Ser-23) interacts with CTP. Ser-23 contacts UTP. Residues 24–29 (SLGKGL) and Asp-81 each bind ATP. Residues Asp-81 and Glu-155 each coordinate Mg(2+). Residues 162-164 (DIE), 202-207 (KTKPTQ), and Lys-238 contribute to the CTP site. UTP is bound by residues 202–207 (KTKPTQ) and Lys-238. Residues 306–554 (EVALVGKYVD…IAAALKYKLA (249 aa)) form the Glutamine amidotransferase type-1 domain. Gly-369 contributes to the L-glutamine binding site. Cys-396 (nucleophile; for glutamine hydrolysis) is an active-site residue. Residues 397–400 (LGLQ), Glu-419, and Arg-480 contribute to the L-glutamine site. Active-site residues include His-527 and Glu-529.

Belongs to the CTP synthase family. In terms of assembly, homotetramer.

The catalysed reaction is UTP + L-glutamine + ATP + H2O = CTP + L-glutamate + ADP + phosphate + 2 H(+). It carries out the reaction L-glutamine + H2O = L-glutamate + NH4(+). The enzyme catalyses UTP + NH4(+) + ATP = CTP + ADP + phosphate + 2 H(+). It functions in the pathway pyrimidine metabolism; CTP biosynthesis via de novo pathway; CTP from UDP: step 2/2. Allosterically activated by GTP, when glutamine is the substrate; GTP has no effect on the reaction when ammonia is the substrate. The allosteric effector GTP functions by stabilizing the protein conformation that binds the tetrahedral intermediate(s) formed during glutamine hydrolysis. Inhibited by the product CTP, via allosteric rather than competitive inhibition. Catalyzes the ATP-dependent amination of UTP to CTP with either L-glutamine or ammonia as the source of nitrogen. Regulates intracellular CTP levels through interactions with the four ribonucleotide triphosphates. This chain is CTP synthase, found in Nocardia farcinica (strain IFM 10152).